Here is a 2383-residue protein sequence, read N- to C-terminus: Highly reducing polyketide synthase SAT13 (2383 aa).

Residues 6 to 433 (PVPLAIVGIA…GTNAHAVLER (428 aa)) enclose the Ketosynthase family 3 (KS3) domain. Residues Cys180, His315, and His355 each act as for beta-ketoacyl synthase activity in the active site. Residues 536–828 (FIFTGQGAQW…IGPHSALAGP (293 aa)) form a malonyl-CoA:ACP transacylase (MAT) domain region. Ser626 functions as the For malonyltransferase activity in the catalytic mechanism. Residues 922–1062 (HDLLGLRMTE…GNIVVVFKTS (141 aa)) form an N-terminal hotdog fold region. Residues 922–1239 (HDLLGLRMTE…GMELRSFVAR (318 aa)) form a dehydratase (DH) domain region. The 321-residue stretch at 922 to 1242 (HDLLGLRMTE…LRSFVARDSN (321 aa)) folds into the PKS/mFAS DH domain. His954 serves as the catalytic Proton acceptor; for dehydratase activity. The C-terminal hotdog fold stretch occupies residues 1087–1242 (GKLTHAGQLY…LRSFVARDSN (156 aa)). Residue Asp1152 is the Proton donor; for dehydratase activity of the active site. The interval 1669–1977 (DGQNRLVFVE…KQGSMKKCVL (309 aa)) is enoylreductase (ER) domain. The segment at 2001-2184 (ATYVVAGGLG…MSLNIGGIKD (184 aa)) is catalytic ketoreductase (KRc) domain. The region spanning 2287-2364 (EISEFVARSI…DLAQKVVSRS (78 aa)) is the Carrier domain. Position 2324 is an O-(pantetheine 4'-phosphoryl)serine (Ser2324).

The protein operates within mycotoxin biosynthesis. In terms of biological role, highly reducing polyketide synthase; part of the satratoxin SC2 cluster involved in the biosynthesis of satratoxins, trichothecene mycotoxins that are associated with human food poisonings. Satratoxins are suggested to be made by products of multiple gene clusters (SC1, SC2 and SC3) that encode 21 proteins in all, including polyketide synthases, acetyltransferases, and other enzymes expected to modify the trichothecene skeleton. SC1 encodes 10 proteins, SAT1 to SAT10. The largest are SAT8, which encodes a putative polyketide synthase (PKS) with a conventional non-reducing architecture, and SAT10, a putative protein containing four ankyrin repeats and thus may be involved in protein scaffolding. The putative short-chain reductase SAT3 may assist the PKS in some capacity. SAT6 contains a secretory lipase domain and acts probably as a trichothecene esterase. SAT5 encodes a putative acetyltransferase, and so, with SAT6, may affect endogenous protection from toxicity. The probable transcription factor SAT9 may regulate the expression of the SC1 cluster. SC2 encodes proteins SAT11 to SAT16, the largest of which encodes the putative reducing PKS SAT13. SAT11 is a cytochrome P450 monooxygenase, while SAT14 and SAT16 are probable acetyltransferases. The SC2 cluster may be regulated by the transcription factor SAT15. SC3 is a small cluster that encodes 5 proteins, SAT17 to SAT21. SAT21 is a putative MFS-type transporter which may have a role in exporting secondary metabolites. The four other proteins putatively encoded in SC3 include the taurine hydroxylase-like protein SAT17, the O-methyltransferase SAT18, the acetyltransferase SAT19, and the Cys6-type zinc finger SAT20, the latter being probably involved in regulation of SC3 expression. This Stachybotrys chartarum (strain CBS 109288 / IBT 7711) (Toxic black mold) protein is Highly reducing polyketide synthase SAT13.